A 147-amino-acid chain; its full sequence is D-aminoacyl-tRNA deacylase (147 aa).

Residues 137 to 138 (GP) carry the Gly-cisPro motif, important for rejection of L-amino acids motif.

The protein belongs to the DTD family. As to quaternary structure, homodimer.

The protein localises to the cytoplasm. It carries out the reaction glycyl-tRNA(Ala) + H2O = tRNA(Ala) + glycine + H(+). The catalysed reaction is a D-aminoacyl-tRNA + H2O = a tRNA + a D-alpha-amino acid + H(+). Its function is as follows. An aminoacyl-tRNA editing enzyme that deacylates mischarged D-aminoacyl-tRNAs. Also deacylates mischarged glycyl-tRNA(Ala), protecting cells against glycine mischarging by AlaRS. Acts via tRNA-based rather than protein-based catalysis; rejects L-amino acids rather than detecting D-amino acids in the active site. By recycling D-aminoacyl-tRNA to D-amino acids and free tRNA molecules, this enzyme counteracts the toxicity associated with the formation of D-aminoacyl-tRNA entities in vivo and helps enforce protein L-homochirality. This Jannaschia sp. (strain CCS1) protein is D-aminoacyl-tRNA deacylase.